The chain runs to 424 residues: Spermatogenesis-associated protein 2-like protein (424 aa).

Disordered regions lie at residues 233–258 and 273–300; these read EDEGSEDASLYGEPSPGPDSPPAELA and TGGRAWEPPAEELPQASSPPYGALEEGL. At serine 327 the chain carries Phosphoserine.

Belongs to the SPATA2 family.

The sequence is that of Spermatogenesis-associated protein 2-like protein from Homo sapiens (Human).